Consider the following 93-residue polypeptide: Translation initiation factor IF-1 (93 aa).

Residues 1–72 (MAKEELIQFE…EKGRLIFRHK (72 aa)) enclose the S1-like domain. The tract at residues 69–93 (FRHKDERPSGAPRGGPPRGGQFRRR) is disordered.

This sequence belongs to the IF-1 family. Component of the 30S ribosomal translation pre-initiation complex which assembles on the 30S ribosome in the order IF-2 and IF-3, IF-1 and N-formylmethionyl-tRNA(fMet); mRNA recruitment can occur at any time during PIC assembly.

It is found in the cytoplasm. One of the essential components for the initiation of protein synthesis. Stabilizes the binding of IF-2 and IF-3 on the 30S subunit to which N-formylmethionyl-tRNA(fMet) subsequently binds. Helps modulate mRNA selection, yielding the 30S pre-initiation complex (PIC). Upon addition of the 50S ribosomal subunit IF-1, IF-2 and IF-3 are released leaving the mature 70S translation initiation complex. The sequence is that of Translation initiation factor IF-1 from Nitrobacter hamburgensis (strain DSM 10229 / NCIMB 13809 / X14).